Consider the following 283-residue polypeptide: uncharacterized protein (283 aa).

Helical transmembrane passes span 18 to 38 (VYDI…AKLI), 61 to 81 (VIYF…LGLD), and 94 to 114 (IVLG…IFLI).

Belongs to the MscS (TC 1.A.23) family.

The protein resides in the cell membrane. This is an uncharacterized protein from Archaeoglobus fulgidus (strain ATCC 49558 / DSM 4304 / JCM 9628 / NBRC 100126 / VC-16).